We begin with the raw amino-acid sequence, 304 residues long: Ribosomal RNA small subunit methyltransferase H (304 aa).

S-adenosyl-L-methionine-binding positions include 50–52 (GGH), Asp69, Phe97, Asp113, and Gln120.

It belongs to the methyltransferase superfamily. RsmH family.

The protein resides in the cytoplasm. The catalysed reaction is cytidine(1402) in 16S rRNA + S-adenosyl-L-methionine = N(4)-methylcytidine(1402) in 16S rRNA + S-adenosyl-L-homocysteine + H(+). Specifically methylates the N4 position of cytidine in position 1402 (C1402) of 16S rRNA. The protein is Ribosomal RNA small subunit methyltransferase H of Rippkaea orientalis (strain PCC 8801 / RF-1) (Cyanothece sp. (strain PCC 8801)).